A 362-amino-acid polypeptide reads, in one-letter code: Neisseria adhesin A (362 aa).

The N-terminal stretch at 1 to 23 (MKHFPSKVLTTAILATFCSGALA) is a signal peptide. The interval 24 to 169 (ATSDDDVKKA…NIVKIDEKLE (146 aa)) is head domain. 2 coiled-coil regions span residues 90–146 (VTNL…LNKL) and 183–288 (NDIA…KETR). The segment at 170 to 307 (AVADTVDKHA…SGLFQPYNVG (138 aa)) is coiled stalk domain. A run of 4 beta stranded transmembrane segments spans residues 307 to 317 (GRFNVTAAVGG), 321 to 332 (ESAVAIGTGFRF), 339 to 345 (KAGVAVG), and 351 to 362 (SAAYHVGVNYEW). The translocator domain stretch occupies residues 308–362 (RFNVTAAVGGYKSESAVAIGTGFRFTENFAAKAGVAVGTSSGSSAAYHVGVNYEW).

Belongs to the autotransporter-2 (AT-2) (TC 1.B.40) family. In terms of assembly, forms high molecular weight oligomers in whole cell extracts that are not disrupted by boiling in SDS buffer. Homotrimer. A fragment containing the N-terminal half of the mature protein (residues 24-210, head domain plus part of the stalk) binds human integrin beta-1 (ITGB1). It was not seen to bind immobilized purified CEACAMs 1, 3, 5, 6 or 8 nor commercially prepared type I collagen, fibronectin or matrigel.

The protein resides in the cell surface. It localises to the cell outer membrane. Its function is as follows. Adheres to and induces bacterial uptake by human epithelial cells. Upon expression in engineered Y.enterocolitica confers an 11- to 15-fold increase in bacterial adherence and uptake by human epithelial cell lines; part of the uptake is mediated by integrin beta-1 (ITGB1) suggesting it may be a human receptor for NadA. A bacterial cell surface protein; antisera against this protein induce complement-mediated killing of this and other strains. The polypeptide is Neisseria adhesin A (Neisseria meningitidis serogroup B (strain ATCC BAA-335 / MC58)).